The sequence spans 493 residues: ATP-dependent RNA helicase dbp3 (493 aa).

Residues 1-38 (MTKRDYQNDTTAESRPTKKSKGEKKVKETKEKKEKKVK) form a disordered region. Residues 23-34 (EKKVKETKEKKE) are compositionally biased toward basic and acidic residues. Residues 97-105 (SFKSPTSIQ) carry the Q motif motif. Residues 109–285 (WPLLFGGRDV…STFMSSPVTV (177 aa)) form the Helicase ATP-binding domain. Residue 122–129 (AETGSGKT) coordinates ATP. The DEAD box motif lies at 232 to 235 (DEAD). Residues 316-462 (RLVQLLKQHQ…EVPEELLKFG (147 aa)) form the Helicase C-terminal domain.

This sequence belongs to the DEAD box helicase family. DDX5/DBP2 subfamily.

It is found in the nucleus. The protein localises to the nucleolus. The enzyme catalyses ATP + H2O = ADP + phosphate + H(+). In terms of biological role, ATP-dependent RNA helicase required for 60S ribosomal subunit synthesis. Involved in efficient pre-rRNA processing, predominantly at site A3, which is necessary for the normal formation of 25S and 5.8S rRNAs. The chain is ATP-dependent RNA helicase dbp3 (dbp3) from Aspergillus terreus (strain NIH 2624 / FGSC A1156).